A 158-amino-acid chain; its full sequence is Succinate dehydrogenase [ubiquinone] cytochrome b small subunit B, mitochondrial (158 aa).

The N-terminal 29 residues, 1-29 (MAALVRISSLCHRGVSPLLFRPSSLIRPL), are a transit peptide targeting the mitochondrion. Residues 30 to 62 (AVQQKDHDCSYLISARIHATPSNYAGSGSKAAT) lie on the Mitochondrial matrix side of the membrane. The helical transmembrane segment at 63-84 (MHWTGERILSIALLSLAPVAYF) threads the bilayer. Over 85–89 (CPSPA) the chain is Mitochondrial intermembrane. The helical transmembrane segment at 90–110 (VDYSLAAALTLHGHWGLGQVV) threads the bilayer. Residue H101 participates in heme b binding. The Mitochondrial matrix portion of the chain corresponds to 111 to 119 (TDYVHGDAK). Y113 provides a ligand contact to a ubiquinone. The helical transmembrane segment at 120-141 (IKMANAGLFVLSTVTFAGLCYF) threads the bilayer. Residues 142–158 (NYHDVGICKAVALLWSK) lie on the Mitochondrial intermembrane side of the membrane.

The protein belongs to the CybS family. Component of complex II composed of four subunits: the flavoprotein (FP) SDHA, iron-sulfur protein (IP) SDHB, and a cytochrome b560 composed of SDHC and SDHD.

The protein localises to the mitochondrion inner membrane. Its pathway is carbohydrate metabolism; tricarboxylic acid cycle. Functionally, membrane-anchoring subunit of succinate dehydrogenase (SDH) that is involved in complex II of the mitochondrial electron transport chain and is responsible for transferring electrons from succinate to ubiquinone (coenzyme Q). SDH also oxidizes malate to the non-canonical enol form of oxaloacetate, enol-oxaloacetate. Enol-oxaloacetate, which is a potent inhibitor of the succinate dehydrogenase activity, is further isomerized into keto-oxaloacetate. This is Succinate dehydrogenase [ubiquinone] cytochrome b small subunit B, mitochondrial (sdhdb) from Danio rerio (Zebrafish).